Reading from the N-terminus, the 302-residue chain is Dermonecrotic toxin LiSicTox-alphaIA2bii (302 aa).

A signal peptide spans 1-14 (IALILVCWSVLSQA). A propeptide spanning residues 15-22 (AQTDVEGR) is cleaved from the precursor. The active site involves histidine 34. Mg(2+) contacts are provided by glutamate 54 and aspartate 56. Histidine 70 (nucleophile) is an active-site residue. 2 cysteine pairs are disulfide-bonded: cysteine 74–cysteine 80 and cysteine 76–cysteine 219. Residue aspartate 114 participates in Mg(2+) binding. Residue asparagine 279 is glycosylated (N-linked (GlcNAc...) asparagine).

Belongs to the arthropod phospholipase D family. Class II subfamily. Requires Mg(2+) as cofactor. As to expression, expressed by the venom gland.

It localises to the secreted. The enzyme catalyses an N-(acyl)-sphingosylphosphocholine = an N-(acyl)-sphingosyl-1,3-cyclic phosphate + choline. It catalyses the reaction an N-(acyl)-sphingosylphosphoethanolamine = an N-(acyl)-sphingosyl-1,3-cyclic phosphate + ethanolamine. The catalysed reaction is a 1-acyl-sn-glycero-3-phosphocholine = a 1-acyl-sn-glycero-2,3-cyclic phosphate + choline. It carries out the reaction a 1-acyl-sn-glycero-3-phosphoethanolamine = a 1-acyl-sn-glycero-2,3-cyclic phosphate + ethanolamine. Dermonecrotic toxins cleave the phosphodiester linkage between the phosphate and headgroup of certain phospholipids (sphingolipid and lysolipid substrates), forming an alcohol (often choline) and a cyclic phosphate. This toxin acts on sphingomyelin (SM). It may also act on ceramide phosphoethanolamine (CPE), lysophosphatidylcholine (LPC) and lysophosphatidylethanolamine (LPE), but not on lysophosphatidylserine (LPS), and lysophosphatidylglycerol (LPG). It acts by transphosphatidylation, releasing exclusively cyclic phosphate products as second products. Induces dermonecrosis, hemolysis, increased vascular permeability, edema, inflammatory response, and platelet aggregation. This chain is Dermonecrotic toxin LiSicTox-alphaIA2bii, found in Loxosceles intermedia (Brown spider).